Here is a 109-residue protein sequence, read N- to C-terminus: Ig kappa chain V region K16-167 (109 aa).

The tract at residues 1–23 is framework-1; sequence ALVMTQTPSPVSAAVGGTVTISC. A complementarity-determining-1 region spans residues 24 to 35; the sequence is QASQSVYSNNLS. Positions 36–50 are framework-2; the sequence is WFQQKPGQPPKLLIY. The tract at residues 51–57 is complementarity-determining-2; that stretch reads KASTLAS. The segment at 58–89 is framework-3; sequence GVPSRFKGSGSGTQFTLPISGVECDDAATYYC. The interval 90–99 is complementarity-determining-3; the sequence is QGTNTGNNIV. The segment at 100–109 is framework-4; the sequence is FGTGTEVVVK.

In Oryctolagus cuniculus (Rabbit), this protein is Ig kappa chain V region K16-167.